The sequence spans 421 residues: MLYLEDYLEMIEQLPMDLRDRFTEMREMDLQVQNAMDQLEQRVSEFFMNAKKNKPEWREEQMASIKKDYYKALEDADEKVQLANQIYDLVDRHLRKLDQELAKFKMELEADNAGITEILERRSLELDAPSQPVNNHHAHSHTPVEKRKYNPTSHHAAADHIPEKKFKSEALLSTLTSDASKENTLGCRNNNSTASCNNAYNVNSSQPLASYNIGSLSSGAGAGAITMAAAQAVQATAQMKEGRRTSSLKASYEAFKNNDFQLGKEFSIPRETAGYSSSSALMTTLTQNASSSATDSRSGRKSKNNTKSSSQQSSSSSSSSSSSSLSLCSSSSTVVQEVSQQATVVPESDSNSQVDWTYDPNEPRYCICNQVSYGEMVGCDNQDCPIEWFHYGCVGLTEAPKGKWFCPQCTAAMKRRGSRHK.

Residues 129–163 (PSQPVNNHHAHSHTPVEKRKYNPTSHHAAADHIPE) are disordered. Glycyl lysine isopeptide (Lys-Gly) (interchain with G-Cter in SUMO2) cross-links involve residues K148, K165, and K167. Position 181 is an N6-acetyllysine (K181). Residue K256 forms a Glycyl lysine isopeptide (Lys-Gly) (interchain with G-Cter in SUMO2) linkage. Residue K264 is modified to N6-acetyllysine. Over residues 286 to 296 (TQNASSSATDS) the composition is skewed to polar residues. The interval 286–323 (TQNASSSATDSRSGRKSKNNTKSSSQQSSSSSSSSSSS) is disordered. A compositionally biased stretch (low complexity) spans 308–323 (SSSQQSSSSSSSSSSS). Residues 363-412 (PRYCICNQVSYGEMVGCDNQDCPIEWFHYGCVGLTEAPKGKWFCPQCTAA) form a PHD-type zinc finger. Residues C366, C368, C379, C384, H390, C393, C406, and C409 each contribute to the Zn(2+) site.

It belongs to the ING family. Interacts with H3K4me3 and to a lesser extent with H3K4me2. Component of the NuA4 histone acetyltransferase complex which contains the catalytic subunit KAT5/TIP60 and the subunits EP400, TRRAP/PAF400, BRD8/SMAP, EPC1, DMAP1/DNMAP1, RUVBL1/TIP49, RUVBL2, ING3, actin, ACTL6A/BAF53A, MORF4L1/MRG15, MORF4L2/MRGX, MRGBP, YEATS4/GAS41, VPS72/YL1 and MEAF6. The NuA4 complex interacts with MYC. HTATTIP/TIP60, EPC1, and ING3 together constitute a minimal HAT complex termed Piccolo NuA4. Component of a SWR1-like complex.

It is found in the nucleus. Functionally, component of the NuA4 histone acetyltransferase (HAT) complex which is involved in transcriptional activation of select genes principally by acetylation of nucleosomal histones H4 and H2A. This modification may both alter nucleosome - DNA interactions and promote interaction of the modified histones with other proteins which positively regulate transcription. This complex may be required for the activation of transcriptional programs associated with oncogene and proto-oncogene mediated growth induction, tumor suppressor mediated growth arrest and replicative senescence, apoptosis, and DNA repair. NuA4 may also play a direct role in DNA repair when directly recruited to sites of DNA damage. Component of a SWR1-like complex that specifically mediates the removal of histone H2A.Z/H2AZ1 from the nucleosome. The protein is Inhibitor of growth protein 3 (Ing3) of Mus musculus (Mouse).